The chain runs to 545 residues: Chaperonin GroEL (545 aa).

ATP-binding positions include 29 to 32 (TLGP), Lys-50, 86 to 90 (DGTTT), Gly-415, and Asp-495.

This sequence belongs to the chaperonin (HSP60) family. In terms of assembly, forms a cylinder of 14 subunits composed of two heptameric rings stacked back-to-back. Interacts with the co-chaperonin GroES.

The protein localises to the cytoplasm. It carries out the reaction ATP + H2O + a folded polypeptide = ADP + phosphate + an unfolded polypeptide.. Functionally, together with its co-chaperonin GroES, plays an essential role in assisting protein folding. The GroEL-GroES system forms a nano-cage that allows encapsulation of the non-native substrate proteins and provides a physical environment optimized to promote and accelerate protein folding. This Porphyromonas gingivalis (strain ATCC 33277 / DSM 20709 / CIP 103683 / JCM 12257 / NCTC 11834 / 2561) protein is Chaperonin GroEL.